A 617-amino-acid polypeptide reads, in one-letter code: Dihydroxy-acid dehydratase (617 aa).

Aspartate 81 contributes to the Mg(2+) binding site. Position 122 (cysteine 122) interacts with [2Fe-2S] cluster. The Mg(2+) site is built by aspartate 123 and lysine 124. The residue at position 124 (lysine 124) is an N6-carboxylysine. Position 195 (cysteine 195) interacts with [2Fe-2S] cluster. Glutamate 492 is a Mg(2+) binding site. Residue serine 518 is the Proton acceptor of the active site.

The protein belongs to the IlvD/Edd family. In terms of assembly, homodimer. It depends on [2Fe-2S] cluster as a cofactor. Mg(2+) is required as a cofactor.

The enzyme catalyses (2R)-2,3-dihydroxy-3-methylbutanoate = 3-methyl-2-oxobutanoate + H2O. It carries out the reaction (2R,3R)-2,3-dihydroxy-3-methylpentanoate = (S)-3-methyl-2-oxopentanoate + H2O. It participates in amino-acid biosynthesis; L-isoleucine biosynthesis; L-isoleucine from 2-oxobutanoate: step 3/4. Its pathway is amino-acid biosynthesis; L-valine biosynthesis; L-valine from pyruvate: step 3/4. In terms of biological role, functions in the biosynthesis of branched-chain amino acids. Catalyzes the dehydration of (2R,3R)-2,3-dihydroxy-3-methylpentanoate (2,3-dihydroxy-3-methylvalerate) into 2-oxo-3-methylpentanoate (2-oxo-3-methylvalerate) and of (2R)-2,3-dihydroxy-3-methylbutanoate (2,3-dihydroxyisovalerate) into 2-oxo-3-methylbutanoate (2-oxoisovalerate), the penultimate precursor to L-isoleucine and L-valine, respectively. This chain is Dihydroxy-acid dehydratase, found in Azorhizobium caulinodans (strain ATCC 43989 / DSM 5975 / JCM 20966 / LMG 6465 / NBRC 14845 / NCIMB 13405 / ORS 571).